Reading from the N-terminus, the 239-residue chain is DNA repair protein RecO (239 aa).

The protein belongs to the RecO family.

Involved in DNA repair and RecF pathway recombination. This chain is DNA repair protein RecO, found in Tolumonas auensis (strain DSM 9187 / NBRC 110442 / TA 4).